Here is a 228-residue protein sequence, read N- to C-terminus: Demethylmenaquinone methyltransferase (228 aa).

S-adenosyl-L-methionine-binding positions include T62, D80, 100–101 (DA), and S117.

Belongs to the class I-like SAM-binding methyltransferase superfamily. MenG/UbiE family.

It catalyses the reaction a 2-demethylmenaquinol + S-adenosyl-L-methionine = a menaquinol + S-adenosyl-L-homocysteine + H(+). It functions in the pathway quinol/quinone metabolism; menaquinone biosynthesis; menaquinol from 1,4-dihydroxy-2-naphthoate: step 2/2. In terms of biological role, methyltransferase required for the conversion of demethylmenaquinol (DMKH2) to menaquinol (MKH2). This chain is Demethylmenaquinone methyltransferase, found in Mycolicibacterium gilvum (strain PYR-GCK) (Mycobacterium gilvum (strain PYR-GCK)).